We begin with the raw amino-acid sequence, 793 residues long: Caldesmon (793 aa).

R12 bears the Phosphoserine mark. E21 bears the Phosphotyrosine mark. Disordered regions lie at residues 26-94 (AYQR…DDEA), 108-407 (QKRL…IKGE), and 434-458 (KKQG…KPTF). Residues 26 to 207 (AYQRNDDDEE…PKRGSIGENQ (182 aa)) form a myosin and calmodulin-binding region. The segment covering 47–56 (QERLRQKQEE) has biased composition (basic and acidic residues). Residues 60–74 (GQVTDQVEVNAQNSV) show a composition bias toward polar residues. The segment covering 108–122 (QKRLQEALERQKEFD) has biased composition (basic and acidic residues). A Phosphoserine modification is found at S129. 2 stretches are compositionally biased toward basic and acidic residues: residues 146-162 (TTEK…RYEI) and 173-188 (QKND…KEDK). 2 positions are modified to phosphoserine: E196 and S202. Glycyl lysine isopeptide (Lys-Gly) (interchain with G-Cter in SUMO2) cross-links involve residues I203 and E209. Basic and acidic residues-rich tracts occupy residues 236 to 407 (EEPK…IKGE) and 435 to 458 (KQGE…KPTF). A run of 3 repeats spans residues 319–332 (EEEK…QRIK), 333–346 (EEEK…QRIK), and 347–360 (EEEK…QRIK). The tract at residues 319-375 (EEEKRAAEERQRIKEEEKRAAEERQRIKEEEKRAAEERQRIKEEEKRAAEERQRARA) is 3 X 14 AA tandem repeats of E-E-E-K-R-A-A-E-E-R-Q-R-I-K. Residue K459 forms a Glycyl lysine isopeptide (Lys-Gly) (interchain with G-Cter in SUMO2) linkage. The segment at 492–640 (KSQNGEFMTH…KKPFKCFTPK (149 aa)) is disordered. Composition is skewed to basic and acidic residues over residues 532–558 (AGKR…KQKQ) and 566–633 (EELK…DKKP). The segment at 564 to 621 (ELEELKKKREERRKVLEEEEQRRKQEEADRKLREEEEKRRLKEEIERRRAEAAEKRQK) is tropomyosin-binding. At S643 the chain carries Phosphoserine. K645 is covalently cross-linked (Glycyl lysine isopeptide (Lys-Gly) (interchain with G-Cter in SUMO2)). A strong actin-binding region spans residues 653 to 686 (LNKSVQKSSGVKSTHQAAIVSKIDSRLEQYTSAI). A Phosphoserine modification is found at S656. Residues 664 to 674 (KSTHQAAIVSK) form a tropomyosin-binding region. Disordered regions lie at residues 687–706 (EGTK…PVPA), 721–740 (VFSS…GLKV), and 747–793 (NEWL…PTKV). A calmodulin-binding region spans residues 716 to 722 (WEKGNVF). The segment covering 721 to 733 (VFSSPTAAGTPNK) has biased composition (polar residues). Phosphoserine is present on S724. 2 positions are modified to phosphothreonine: T730 and T753. S759 carries the post-translational modification Phosphoserine. Residues 765 to 784 (SDLRPGDVSSKRNLWEKQSV) show a composition bias toward basic and acidic residues. Residues 768–793 (RPGDVSSKRNLWEKQSVDKVTSPTKV) are weak actin-binding. Position 789 is a phosphoserine (S789).

This sequence belongs to the caldesmon family. Post-translationally, in non-muscle cells, phosphorylation by CDK1 during mitosis causes caldesmon to dissociate from microfilaments. Phosphorylation reduces caldesmon binding to actin, myosin, and calmodulin as well as its inhibition of actomyosin ATPase activity. Phosphorylation also occurs in both quiescent and dividing smooth muscle cells with similar effects on the interaction with actin and calmodulin and on microfilaments reorganization. CDK1-mediated phosphorylation promotes Schwann cell migration during peripheral nerve regeneration. In terms of tissue distribution, high-molecular-weight caldesmon (isoform 1) is predominantly expressed in smooth muscles, whereas low-molecular-weight caldesmon (isoforms 2, 3, 4 and 5) are widely distributed in non-muscle tissues and cells. Not expressed in skeletal muscle or heart.

The protein resides in the cytoplasm. It is found in the cytoskeleton. The protein localises to the myofibril. It localises to the stress fiber. Functionally, actin- and myosin-binding protein implicated in the regulation of actomyosin interactions in smooth muscle and nonmuscle cells (could act as a bridge between myosin and actin filaments). Stimulates actin binding of tropomyosin which increases the stabilization of actin filament structure. In muscle tissues, inhibits the actomyosin ATPase by binding to F-actin. This inhibition is attenuated by calcium-calmodulin and is potentiated by tropomyosin. Interacts with actin, myosin, two molecules of tropomyosin and with calmodulin. Also plays an essential role during cellular mitosis and receptor capping. Involved in Schwann cell migration during peripheral nerve regeneration. The polypeptide is Caldesmon (CALD1) (Homo sapiens (Human)).